A 181-amino-acid polypeptide reads, in one-letter code: CASP-like protein 2C1 (181 aa).

Over 1–7 (MALEIPK) the chain is Cytoplasmic. A helical membrane pass occupies residues 8–28 (IEAILRGIAILLLVSTACLVG). Residues 29–49 (LDSQTKFVIVYEKEVTYKDLH) lie on the Extracellular side of the membrane. The chain crosses the membrane as a helical span at residues 50-70 (ALVVLVYVDAVAAAYNLLQLC). The Cytoplasmic portion of the chain corresponds to 71–98 (RCSVSALSKGNFKGSYRYLSWACFVLDQ). A helical membrane pass occupies residues 99–119 (LAAYTTFAAHSAALQHSVLGI). Residues 120 to 140 (TGAKVFQWMKWCNRFTRFCFQ) are Extracellular-facing. A helical transmembrane segment spans residues 141–161 (IGGALTCGYIASVLMVMISFI). Residues 162-181 (SAFNLFRLYSPKHFLRLKGT) lie on the Cytoplasmic side of the membrane.

It belongs to the Casparian strip membrane proteins (CASP) family. Homodimer and heterodimers.

It is found in the cell membrane. The protein is CASP-like protein 2C1 of Populus trichocarpa (Western balsam poplar).